Reading from the N-terminus, the 264-residue chain is S-adenosylmethionine decarboxylase proenzyme (264 aa).

Ser-111 functions as the Schiff-base intermediate with substrate; via pyruvic acid in the catalytic mechanism. Ser-111 is subject to Pyruvic acid (Ser); by autocatalysis. His-116 functions as the Proton acceptor; for processing activity in the catalytic mechanism. Residue Cys-139 is the Proton donor; for catalytic activity of the active site.

It belongs to the prokaryotic AdoMetDC family. Type 2 subfamily. As to quaternary structure, heterooctamer of four alpha and four beta chains arranged as a tetramer of alpha/beta heterodimers. The cofactor is pyruvate. In terms of processing, is synthesized initially as an inactive proenzyme. Formation of the active enzyme involves a self-maturation process in which the active site pyruvoyl group is generated from an internal serine residue via an autocatalytic post-translational modification. Two non-identical subunits are generated from the proenzyme in this reaction, and the pyruvate is formed at the N-terminus of the alpha chain, which is derived from the carboxyl end of the proenzyme. The post-translation cleavage follows an unusual pathway, termed non-hydrolytic serinolysis, in which the side chain hydroxyl group of the serine supplies its oxygen atom to form the C-terminus of the beta chain, while the remainder of the serine residue undergoes an oxidative deamination to produce ammonia and the pyruvoyl group blocking the N-terminus of the alpha chain.

The catalysed reaction is S-adenosyl-L-methionine + H(+) = S-adenosyl 3-(methylsulfanyl)propylamine + CO2. The protein operates within amine and polyamine biosynthesis; S-adenosylmethioninamine biosynthesis; S-adenosylmethioninamine from S-adenosyl-L-methionine: step 1/1. Catalyzes the decarboxylation of S-adenosylmethionine to S-adenosylmethioninamine (dcAdoMet), the propylamine donor required for the synthesis of the polyamines spermine and spermidine from the diamine putrescine. The chain is S-adenosylmethionine decarboxylase proenzyme from Geobacillus thermodenitrificans (strain NG80-2).